A 371-amino-acid polypeptide reads, in one-letter code: Glutamate 5-kinase (371 aa).

Lys12 serves as a coordination point for ATP. The substrate site is built by Ser52, Asp136, and Asn148. ATP contacts are provided by residues 168–169 and 210–216; these read SD and TGGMRTK. One can recognise a PUA domain in the interval 275-354; sequence QGEILVDEGA…EDIAEKFGYS (80 aa).

Belongs to the glutamate 5-kinase family.

The protein localises to the cytoplasm. It catalyses the reaction L-glutamate + ATP = L-glutamyl 5-phosphate + ADP. The protein operates within amino-acid biosynthesis; L-proline biosynthesis; L-glutamate 5-semialdehyde from L-glutamate: step 1/2. Functionally, catalyzes the transfer of a phosphate group to glutamate to form L-glutamate 5-phosphate. The protein is Glutamate 5-kinase of Idiomarina loihiensis (strain ATCC BAA-735 / DSM 15497 / L2-TR).